The primary structure comprises 427 residues: G2/mitotic-specific cyclin-3 (427 aa).

The segment covering 1–12 (MHHNSQSLSSGH) has biased composition (polar residues). 2 disordered regions span residues 1 to 29 (MHHN…NLKH) and 89 to 126 (SVAQ…EDQE). Positions 89 to 105 (SVAQRKEADHNDLLTDR) are enriched in basic and acidic residues. Positions 106 to 126 (EQEEPVEDDGESEEDEEEDQE) are enriched in acidic residues.

This sequence belongs to the cyclin family. Cyclin AB subfamily.

Essential for the control of the cell cycle at the G2/M (mitosis) transition. Interacts with the CDC2 protein kinase to form MPF. G2/M cyclins accumulate steadily during G2 and are abruptly destroyed at mitosis. The sequence is that of G2/mitotic-specific cyclin-3 (CLB3) from Saccharomyces cerevisiae (strain ATCC 204508 / S288c) (Baker's yeast).